Reading from the N-terminus, the 413-residue chain is Putative competence-damage inducible protein (413 aa).

The protein belongs to the CinA family.

This chain is Putative competence-damage inducible protein, found in Lacticaseibacillus casei (strain BL23) (Lactobacillus casei).